We begin with the raw amino-acid sequence, 207 residues long: Ribosomal RNA small subunit methyltransferase G (207 aa).

Residues Gly73, Leu78, 124 to 125 (VE), and Arg139 contribute to the S-adenosyl-L-methionine site.

It belongs to the methyltransferase superfamily. RNA methyltransferase RsmG family.

The protein localises to the cytoplasm. It carries out the reaction guanosine(527) in 16S rRNA + S-adenosyl-L-methionine = N(7)-methylguanosine(527) in 16S rRNA + S-adenosyl-L-homocysteine. In terms of biological role, specifically methylates the N7 position of guanine in position 527 of 16S rRNA. The protein is Ribosomal RNA small subunit methyltransferase G of Klebsiella pneumoniae subsp. pneumoniae (strain ATCC 700721 / MGH 78578).